A 796-amino-acid chain; its full sequence is Lon protease (796 aa).

Positions 19 to 213 (LPVVVTRGIF…LLKELIINRP (195 aa)) constitute a Lon N-terminal domain. An ATP-binding site is contributed by 376–383 (GPPGVGKT). The region spanning 612–793 (ESQVGVVTGL…EDVYEIIFKN (182 aa)) is the Lon proteolytic domain. Active-site residues include Ser699 and Lys742.

This sequence belongs to the peptidase S16 family. Homohexamer. Organized in a ring with a central cavity.

It localises to the cytoplasm. The catalysed reaction is Hydrolysis of proteins in presence of ATP.. ATP-dependent serine protease that mediates the selective degradation of mutant and abnormal proteins as well as certain short-lived regulatory proteins. Required for cellular homeostasis and for survival from DNA damage and developmental changes induced by stress. Degrades polypeptides processively to yield small peptide fragments that are 5 to 10 amino acids long. Binds to DNA in a double-stranded, site-specific manner. The protein is Lon protease of Mycoplasma mycoides subsp. mycoides SC (strain CCUG 32753 / NCTC 10114 / PG1).